The chain runs to 202 residues: Twist-related protein 1 (202 aa).

A compositionally biased stretch (low complexity) spans 1 to 18; that stretch reads MMQDVSSSPVSPADDSLS. The tract at residues 1–105 is disordered; it reads MMQDVSSSPV…GGGSPQSYEE (105 aa). A compositionally biased stretch (basic residues) spans 34–43; sequence RGGRKRRSSR. 2 stretches are compositionally biased toward gly residues: residues 46–65 and 80–99; these read AGGG…GGDE and GCGG…GGGS. Residues 108-159 enclose the bHLH domain; it reads TQRVMANVRERQRTQSLNEAFAALRKIIPTLPSDKLSKIQTLKLAARYIDFL. Positions 161–191 are sufficient for transactivation activity; it reads QVLQSDELDSKMASCSYVAHERLSYAFSVWR.

In terms of assembly, efficient DNA binding requires dimerization with another bHLH protein. Homodimer or heterodimer with E proteins such as TCF3. ID1 binds preferentially to TCF3 but does not interact efficiently with TWIST1 so ID1 levels control the amount of TCF3 available to dimerize with TWIST1 and thus determine the type of dimer formed. In terms of tissue distribution, subset of mesodermal cells.

The protein localises to the nucleus. In terms of biological role, acts as a transcriptional regulator. Inhibits myogenesis by sequestrating E proteins, inhibiting trans-activation by MEF2, and inhibiting DNA-binding by MYOD1 through physical interaction. This interaction probably involves the basic domains of both proteins. Also represses expression of pro-inflammatory cytokines such as TNFA and IL1B. Regulates cranial suture patterning and fusion. Activates transcription as a heterodimer with E proteins. Regulates gene expression differentially, depending on dimer composition. Homodimers induce expression of FGFR2 and POSTN while heterodimers repress FGFR2 and POSTN expression and induce THBS1 expression. Heterodimerization is also required for osteoblast differentiation. Represses the activity of the circadian transcriptional activator: NPAS2-BMAL1 heterodimer. In Homo sapiens (Human), this protein is Twist-related protein 1 (TWIST1).